The sequence spans 533 residues: Dipeptide-binding protein (533 aa).

The signal sequence occupies residues 1–24 (MRKILPLRAWLAAGLILGSPFSHA).

This sequence belongs to the bacterial solute-binding protein 5 family.

Its subcellular location is the periplasm. Its function is as follows. Binds different dipeptides. Probably bind only L-amino acid containing dipeptides. This is Dipeptide-binding protein from Pseudomonas aeruginosa (strain ATCC 15692 / DSM 22644 / CIP 104116 / JCM 14847 / LMG 12228 / 1C / PRS 101 / PAO1).